We begin with the raw amino-acid sequence, 214 residues long: A-type ATP synthase subunit D (214 aa).

The protein belongs to the V-ATPase D subunit family. Has multiple subunits with at least A(3), B(3), C, D, E, F, H, I and proteolipid K(x).

It localises to the cell membrane. Functionally, component of the A-type ATP synthase that produces ATP from ADP in the presence of a proton gradient across the membrane. The protein is A-type ATP synthase subunit D of Thermococcus kodakarensis (strain ATCC BAA-918 / JCM 12380 / KOD1) (Pyrococcus kodakaraensis (strain KOD1)).